The sequence spans 492 residues: N-succinylglutamate 5-semialdehyde dehydrogenase (492 aa).

220–225 lines the NAD(+) pocket; sequence GSANTG. Catalysis depends on residues E243 and C277.

The protein belongs to the aldehyde dehydrogenase family. AstD subfamily.

It carries out the reaction N-succinyl-L-glutamate 5-semialdehyde + NAD(+) + H2O = N-succinyl-L-glutamate + NADH + 2 H(+). The protein operates within amino-acid degradation; L-arginine degradation via AST pathway; L-glutamate and succinate from L-arginine: step 4/5. In terms of biological role, catalyzes the NAD-dependent reduction of succinylglutamate semialdehyde into succinylglutamate. This is N-succinylglutamate 5-semialdehyde dehydrogenase from Escherichia coli O7:K1 (strain IAI39 / ExPEC).